Here is a 327-residue protein sequence, read N- to C-terminus: Phenylalanine--tRNA ligase alpha subunit (327 aa).

Residue Glu252 coordinates Mg(2+).

The protein belongs to the class-II aminoacyl-tRNA synthetase family. Phe-tRNA synthetase alpha subunit type 1 subfamily. In terms of assembly, tetramer of two alpha and two beta subunits. It depends on Mg(2+) as a cofactor.

It is found in the cytoplasm. The enzyme catalyses tRNA(Phe) + L-phenylalanine + ATP = L-phenylalanyl-tRNA(Phe) + AMP + diphosphate + H(+). The protein is Phenylalanine--tRNA ligase alpha subunit of Klebsiella pneumoniae (strain 342).